The primary structure comprises 383 residues: uncharacterized protein (383 aa).

[4Fe-4S] cluster contacts are provided by C12, C18, C21, and C88. Residues Q219, F246, E267, and D314 each coordinate S-adenosyl-L-methionine. C341 acts as the Nucleophile in catalysis.

Belongs to the class I-like SAM-binding methyltransferase superfamily. RNA M5U methyltransferase family.

This is an uncharacterized protein from Protochlamydia amoebophila (strain UWE25).